Consider the following 138-residue polypeptide: Protein FAM136A (138 aa).

Position 2 is an N-acetylalanine (Ala-2). Phosphothreonine occurs at positions 124 and 126.

This sequence belongs to the FAM136 family.

The chain is Protein FAM136A (FAM136A) from Homo sapiens (Human).